Reading from the N-terminus, the 791-residue chain is uncharacterized protein (791 aa).

A helical membrane pass occupies residues 10–30 (LLTITIGAVAVSSILLGGIFY). The span at 56-76 (NLDYQKARPSIKDNNLKEIPK) shows a compositional bias: basic and acidic residues. Positions 56 to 175 (NLDYQKARPS…PQPQQIPNQS (120 aa)) are disordered. Positions 77-97 (PKPQPKPEPQPTPFPDPIPTP) are enriched in pro residues. Over residues 98–124 (PKKEELKKPEIKPEEPKKPEIKPEPIP) the composition is skewed to basic and acidic residues. The segment covering 125–139 (KPKPQPIPQPTPPVE) has biased composition (pro residues).

It to U.parvum UU044.

The protein localises to the membrane. This is an uncharacterized protein from Ureaplasma parvum serovar 3 (strain ATCC 700970).